Here is a 620-residue protein sequence, read N- to C-terminus: Cryptochrome-1 (620 aa).

The 130-residue stretch at 3 to 132 (VNAVHWFRKG…EVIVRISHTL (130 aa)) folds into the Photolyase/cryptochrome alpha/beta domain. 3 consecutive short sequence motifs (LIR) follow at residues 50-54 (NRWRF), 82-87 (DVFPRL), and 151-156 (KRFQTL). S252 is a binding site for FAD. 4 consecutive short sequence motifs (LIR) follow at residues 255–260 (LRFGCL), 271–276 (DLYKKV), 285–290 (SLYGQL), and 335–339 (TGFPW). Residue Q289 coordinates FAD. H355 contributes to the FAD binding site. Positions 379-384 (KVFEEL) match the LIR 8 motif. FAD is bound at residue 387–389 (DAD). Short sequence motifs (LIR) lie at residues 395-400 (GSWMWL), 411-416 (HCYCPV), 430-435 (RRYLPV), 486-491 (QIYQQL), and 492-497 (SRYRGL). Residues 592 to 620 (GTGISAGKRPNPEEETQSVGPKVQRQSTN) form a disordered region.

Belongs to the DNA photolyase class-1 family. As to quaternary structure, component of the circadian core oscillator, which includes the CRY proteins, CLOCK or NPAS2, BMAL1 or BMAL2, CSNK1E, and the PER proteins. Requires FAD as cofactor. (6R)-5,10-methylene-5,6,7,8-tetrahydrofolate is required as a cofactor. In terms of tissue distribution, expressed in the retina. High levels found in ganglion cells of the retina.

The protein localises to the cytoplasm. It localises to the nucleus. Functionally, transcriptional repressor which forms a core component of the circadian clock. The circadian clock, an internal time-keeping system, regulates various physiological processes through the generation of approximately 24 hour circadian rhythms in gene expression, which are translated into rhythms in metabolism and behavior. It is derived from the Latin roots 'circa' (about) and 'diem' (day) and acts as an important regulator of a wide array of physiological functions including metabolism, sleep, body temperature, blood pressure, endocrine, immune, cardiovascular, and renal function. Consists of two major components: the central clock, residing in the suprachiasmatic nucleus (SCN) of the brain, and the peripheral clocks that are present in nearly every tissue and organ system. Both the central and peripheral clocks can be reset by environmental cues, also known as Zeitgebers (German for 'timegivers'). The predominant Zeitgeber for the central clock is light, which is sensed by retina and signals directly to the SCN. The central clock entrains the peripheral clocks through neuronal and hormonal signals, body temperature and feeding-related cues, aligning all clocks with the external light/dark cycle. Circadian rhythms allow an organism to achieve temporal homeostasis with its environment at the molecular level by regulating gene expression to create a peak of protein expression once every 24 hours to control when a particular physiological process is most active with respect to the solar day. Transcription and translation of core clock components (CLOCK, NPAS2, BMAL1, BMAL2, PER1, PER2, PER3, CRY1 and CRY2) plays a critical role in rhythm generation, whereas delays imposed by post-translational modifications (PTMs) are important for determining the period (tau) of the rhythms (tau refers to the period of a rhythm and is the length, in time, of one complete cycle). A diurnal rhythm is synchronized with the day/night cycle, while the ultradian and infradian rhythms have a period shorter and longer than 24 hours, respectively. Disruptions in the circadian rhythms contribute to the pathology of cardiovascular diseases, cancer, metabolic syndromes and aging. A transcription/translation feedback loop (TTFL) forms the core of the molecular circadian clock mechanism. Transcription factors, CLOCK or NPAS2 and BMAL1 or BMAL2, form the positive limb of the feedback loop, act in the form of a heterodimer and activate the transcription of core clock genes and clock-controlled genes (involved in key metabolic processes), harboring E-box elements (5'-CACGTG-3') within their promoters. The core clock genes: PER1/2/3 and CRY1/2 which are transcriptional repressors form the negative limb of the feedback loop and interact with the CLOCK|NPAS2-BMAL1|BMAL2 heterodimer inhibiting its activity and thereby negatively regulating their own expression. This heterodimer also activates nuclear receptors NR1D1, NR1D2, RORA, RORB and RORG, which form a second feedback loop and which activate and repress BMAL1 transcription, respectively. CRY1 and CRY2 have redundant functions but also differential and selective contributions at least in defining the pace of the SCN circadian clock and its circadian transcriptional outputs. More potent transcriptional repressor in cerebellum and liver than CRY2, though more effective in lengthening the period of the SCN oscillator. On its side, CRY2 seems to play a critical role in tuning SCN circadian period by opposing the action of CRY1. With CRY2, is dispensable for circadian rhythm generation but necessary for the development of intercellular networks for rhythm synchrony. Capable of translocating circadian clock core proteins such as PER proteins to the nucleus. Interacts with CLOCK:BMAL1 independently of PER proteins and is found at CLOCK:BMAL1-bound sites, suggesting that CRY may act as a molecular gatekeeper to maintain CLOCK:BMAL1 in a poised and repressed state until the proper time for transcriptional activation. The sequence is that of Cryptochrome-1 (CRY1) from Sylvia borin (Garden warbler).